A 244-amino-acid chain; its full sequence is DNA repair protein RecO (244 aa).

It belongs to the RecO family.

Involved in DNA repair and RecF pathway recombination. This Nocardioides sp. (strain ATCC BAA-499 / JS614) protein is DNA repair protein RecO.